The primary structure comprises 288 residues: ATP synthase gamma chain 1 (288 aa).

It belongs to the ATPase gamma chain family. As to quaternary structure, F-type ATPases have 2 components, CF(1) - the catalytic core - and CF(0) - the membrane proton channel. CF(1) has five subunits: alpha(3), beta(3), gamma(1), delta(1), epsilon(1). CF(0) has three main subunits: a, b and c.

The protein localises to the cell inner membrane. In terms of biological role, produces ATP from ADP in the presence of a proton gradient across the membrane. The gamma chain is believed to be important in regulating ATPase activity and the flow of protons through the CF(0) complex. The sequence is that of ATP synthase gamma chain 1 from Photobacterium profundum (strain SS9).